Consider the following 347-residue polypeptide: sn-glycerol-3-phosphate import ATP-binding protein UgpC 1 (347 aa).

An ABC transporter domain is found at 4–234 (IELIDLKKNY…PETVFVAGFI (231 aa)). 36 to 43 (GPSGCGKS) serves as a coordination point for ATP.

It belongs to the ABC transporter superfamily. sn-glycerol-3-phosphate importer (TC 3.A.1.1.3) family. The complex is composed of two ATP-binding proteins (UgpC), two transmembrane proteins (UgpA and UgpE) and a solute-binding protein (UgpB).

The protein resides in the cell inner membrane. The enzyme catalyses sn-glycerol 3-phosphate(out) + ATP + H2O = sn-glycerol 3-phosphate(in) + ADP + phosphate + H(+). Part of the ABC transporter complex UgpBAEC involved in sn-glycerol-3-phosphate (G3P) import. Responsible for energy coupling to the transport system. The chain is sn-glycerol-3-phosphate import ATP-binding protein UgpC 1 from Rhizobium etli (strain ATCC 51251 / DSM 11541 / JCM 21823 / NBRC 15573 / CFN 42).